A 246-amino-acid polypeptide reads, in one-letter code: NAD(P)H-quinone oxidoreductase subunit K, organellar chromatophore (246 aa).

[4Fe-4S] cluster-binding residues include Cys-58, Cys-59, Cys-123, and Cys-154.

It belongs to the complex I 20 kDa subunit family. As to quaternary structure, NDH-1 is composed of 14 different subunits. Subunits nuoB, C, D, E, F, and G constitute the peripheral sector of the complex. [4Fe-4S] cluster serves as cofactor.

The protein localises to the plastid. Its subcellular location is the organellar chromatophore thylakoid membrane. It carries out the reaction a quinone + NADH + H(+) = a quinol + NAD(+). In terms of biological role, NDH-1 shuttles electrons from NADH, via FMN and iron-sulfur (Fe-S) centers, to quinones in the respiratory chain. Couples the redox reaction to proton translocation (for every two electrons transferred, four hydrogen ions are translocated across the cytoplasmic membrane), and thus conserves the redox energy in a proton gradient. The chain is NAD(P)H-quinone oxidoreductase subunit K, organellar chromatophore from Paulinella chromatophora.